Here is a 97-residue protein sequence, read N- to C-terminus: Large ribosomal subunit protein bL28 (97 aa).

The protein belongs to the bacterial ribosomal protein bL28 family.

This chain is Large ribosomal subunit protein bL28, found in Bartonella quintana (strain Toulouse) (Rochalimaea quintana).